The chain runs to 997 residues: Protein translocase subunit SecA (997 aa).

ATP is bound by residues Gln-102, 120-124 (GEGKT), and Asp-521. The disordered stretch occupies residues 893–997 (PADASPNGVV…KYKKCHGAEA (105 aa)). A compositionally biased stretch (basic and acidic residues) spans 938–953 (AIEREFEKKKQQELSH). Positions 981, 983, 992, and 993 each coordinate Zn(2+). Over residues 987–997 (KKYKKCHGAEA) the composition is skewed to basic residues.

It belongs to the SecA family. As to quaternary structure, monomer and homodimer. Part of the essential Sec protein translocation apparatus which comprises SecA, SecYEG and auxiliary proteins SecDF. Other proteins may also be involved. The cofactor is Zn(2+).

The protein localises to the cell inner membrane. It is found in the cytoplasm. It catalyses the reaction ATP + H2O + cellular proteinSide 1 = ADP + phosphate + cellular proteinSide 2.. Part of the Sec protein translocase complex. Interacts with the SecYEG preprotein conducting channel. Has a central role in coupling the hydrolysis of ATP to the transfer of proteins into and across the cell membrane, serving as an ATP-driven molecular motor driving the stepwise translocation of polypeptide chains across the membrane. In Acidobacterium capsulatum (strain ATCC 51196 / DSM 11244 / BCRC 80197 / JCM 7670 / NBRC 15755 / NCIMB 13165 / 161), this protein is Protein translocase subunit SecA.